We begin with the raw amino-acid sequence, 189 residues long: GTPase KRas (189 aa).

At Met-1 the chain carries N-acetylmethionine. The residue at position 2 (Thr-2) is an N-acetylthreonine; in GTPase KRas, N-terminally processed. Residues 10-18 (GAGGVGKSA), 29-35 (VDEYDPT), and 59-60 (AG) contribute to the GTP site. Positions 32–40 (YDPTIEDSY) match the Effector region motif. N6-acetyllysine is present on Lys-104. 116–119 (NKCD) contributes to the GTP binding site. The interval 166 to 185 (YRLKKISKEEKTPGCVKIKK) is hypervariable region. A Glycyl lysine isopeptide (Lys-Gly) (interchain with G-Cter in ubiquitin) cross-link involves residue Lys-170. Cys-180 carries S-palmitoyl cysteine lipidation. Residues Lys-182, Lys-184, and Lys-185 are each lipidated (N6-palmitoyl lysine). Residue Cys-186 is modified to Cysteine methyl ester. Cys-186 carries S-farnesyl cysteine lipidation. The propeptide at 187–189 (VIM) is removed in mature form.

Belongs to the small GTPase superfamily. Ras family. In terms of assembly, interacts with PHLPP. Interacts (active GTP-bound form preferentially) with RGS14. Interacts (when farnesylated) with PDE6D; this promotes dissociation from the cell membrane. Interacts with SOS1. Interacts (when farnesylated) with GPR31. Interacts with RAP1GDS1. Interacts (active GTP-bound form) with both SHOC2 and PP1c (all isoforms) to form a tertiary complex; SHOC2 and PP1c preferably bind M-Ras/MRAS, but they also bind K-Ras/KRAS, N-Ras/NRAS and H-Ras/HRAS. Interacts (GTP-bound form) with MAPKAP1/SIN1; inhibiting K-Ras/KRAS activity. Interacts (when farnesylated) with GPR31. Post-translationally, acetylation at Lys-104 prevents interaction with guanine nucleotide exchange factors (GEFs). Ubiquitinated by the BCR(LZTR1) E3 ubiquitin ligase complex at Lys-170 in a non-degradative manner, leading to inhibit Ras signaling by decreasing Ras association with membranes. In terms of processing, palmitoylated at Lys-182, Lys-184 and Lys-185. Lysine-depalmitoylation by SIRT2 promotes its localization to endomembranes in endocytic pathways.

The protein resides in the cell membrane. The protein localises to the endomembrane system. It is found in the cytoplasm. It localises to the cytosol. It carries out the reaction GTP + H2O = GDP + phosphate + H(+). Its activity is regulated as follows. Alternates between an inactive form bound to GDP and an active form bound to GTP. Activated by a guanine nucleotide-exchange factor (GEF) and inactivated by a GTPase-activating protein (GAP). Interaction with SOS1 promotes exchange of bound GDP to GTP. In terms of biological role, ras proteins bind GDP/GTP and possess intrinsic GTPase activity. Plays an important role in the regulation of cell proliferation. Plays a role in promoting oncogenic events by inducing transcriptional silencing of tumor suppressor genes (TSGs) in colorectal cancer (CRC) cells in a ZNF304-dependent manner. The sequence is that of GTPase KRas (Kras) from Rattus norvegicus (Rat).